The primary structure comprises 65 residues: Small, acid-soluble spore protein C3 (65 aa).

This sequence belongs to the alpha/beta-type SASP family.

In terms of biological role, SASP are bound to spore DNA. They are double-stranded DNA-binding proteins that cause DNA to change to an a-like conformation. They protect the DNA backbone from chemical and enzymatic cleavage and are thus involved in dormant spore's high resistance to UV light. This chain is Small, acid-soluble spore protein C3 (SASP-C3), found in Priestia megaterium (Bacillus megaterium).